We begin with the raw amino-acid sequence, 181 residues long: Der GTPase-activating protein YihI (181 aa).

Disordered regions lie at residues 1 to 75 (MSRK…KKIP) and 145 to 181 (EPEAEEEFEEEAPVRKSRSDDDLLADFEDFDMDDYKG). Residues 32-43 (RLRKKDKKRKGL) show a composition bias toward basic residues. Over residues 146 to 155 (PEAEEEFEEE) the composition is skewed to acidic residues. A compositionally biased stretch (basic and acidic residues) spans 156 to 165 (APVRKSRSDD). Residues 166–181 (DLLADFEDFDMDDYKG) show a composition bias toward acidic residues.

Belongs to the YihI family. In terms of assembly, interacts with Der.

A GTPase-activating protein (GAP) that modifies Der/EngA GTPase function. May play a role in ribosome biogenesis. The chain is Der GTPase-activating protein YihI from Vibrio vulnificus (strain CMCP6).